Reading from the N-terminus, the 191-residue chain is uncharacterized protein (191 aa).

Helical transmembrane passes span 24–44, 51–71, 114–134, 139–159, and 167–187; these read IVRGLIDGSLSALGVVIGASG, IIAAGLGGGIANGLSNILGAF, LIDGISTTIGSALPVVPFFLF, ALYVAIGITIAILFILGVFIG, and IISGIKMVAGALAVAILCFMI.

It is found in the cell membrane. This is an uncharacterized protein from Methanocaldococcus jannaschii (strain ATCC 43067 / DSM 2661 / JAL-1 / JCM 10045 / NBRC 100440) (Methanococcus jannaschii).